A 178-amino-acid chain; its full sequence is Leukemia NUP98 fusion partner 1 (178 aa).

Disordered stretches follow at residues 28-55 (EDQRGLRERHRLQATSHRKTSLPCPLPV), 89-108 (SEDGSFKEPLESKGRSHSKI), and 147-178 (IKSRKKVEEERSSRKEEHGEAHMAPLFEKGPE). Basic residues predominate over residues 34–47 (RERHRLQATSHRKT). The span at 147-167 (IKSRKKVEEERSSRKEEHGEA) shows a compositional bias: basic and acidic residues.

This chain is Leukemia NUP98 fusion partner 1 (LNP1), found in Homo sapiens (Human).